Reading from the N-terminus, the 632-residue chain is Chaperone protein DnaK (632 aa).

T198 is modified (phosphothreonine; by autocatalysis). Residues 524-557 (RREAVDAKNHADSLVHSTEKALAEHGSKIEDSER) form a disordered region.

Belongs to the heat shock protein 70 family.

Functionally, acts as a chaperone. The polypeptide is Chaperone protein DnaK (Nitrobacter hamburgensis (strain DSM 10229 / NCIMB 13809 / X14)).